Here is a 518-residue protein sequence, read N- to C-terminus: Ribonuclease Y (518 aa).

Residues 2 to 22 traverse the membrane as a helical segment; it reads GSIIISALLALVIGAVVGFFV. Residues 208-271 enclose the KH domain; sequence TVSVVNLPND…ETARIALDKL (64 aa). The HD domain occupies 334 to 427; sequence VLKHSVEVAF…VAAADALSAA (94 aa).

This sequence belongs to the RNase Y family.

It is found in the cell membrane. In terms of biological role, endoribonuclease that initiates mRNA decay. The polypeptide is Ribonuclease Y (Geobacillus thermodenitrificans (strain NG80-2)).